Here is a 78-residue protein sequence, read N- to C-terminus: Short neurotoxin 342 (78 aa).

Residues 1 to 21 (MKTLLLTLVVLTIVCLDLGYT) form the signal peptide. Disulfide bonds link Cys24–Cys43, Cys38–Cys57, Cys59–Cys70, and Cys71–Cys76.

Belongs to the three-finger toxin family. Short-chain subfamily. Type I alpha-neurotoxin sub-subfamily. In terms of tissue distribution, expressed by the venom gland.

It is found in the secreted. In terms of biological role, binds to muscle nicotinic acetylcholine receptor (nAChR) and inhibit acetylcholine from binding to the receptor, thereby impairing neuromuscular transmission. The sequence is that of Short neurotoxin 342 from Drysdalia coronoides (White-lipped snake).